A 212-amino-acid chain; its full sequence is Lipid A acyltransferase PagP (212 aa).

The N-terminal stretch at 1–24 (MYLKRTLITLSLITLPIVPFLSYA) is a signal peptide. The span at 36-47 (NLAPVTVDSSDP) shows a compositional bias: polar residues. A disordered region spans residues 36–56 (NLAPVTVDSSDPVSDKQGESW). Residues histidine 84, aspartate 127, and serine 128 contribute to the active site.

It belongs to the lipid A palmitoyltransferase family. As to quaternary structure, homodimer.

The protein resides in the cell outer membrane. The catalysed reaction is a lipid A + a 1,2-diacyl-sn-glycero-3-phosphocholine = a hepta-acyl lipid A + a 2-acyl-sn-glycero-3-phosphocholine. The enzyme catalyses a lipid IVA + a 1,2-diacyl-sn-glycero-3-phosphocholine = a lipid IVB + a 2-acyl-sn-glycero-3-phosphocholine. It carries out the reaction a lipid IIA + a 1,2-diacyl-sn-glycero-3-phosphocholine = a lipid IIB + a 2-acyl-sn-glycero-3-phosphocholine. Functionally, transfers a fatty acid residue from the sn-1 position of a phospholipid to the N-linked hydroxyfatty acid chain on the proximal unit of lipid A or its precursors. The sequence is that of Lipid A acyltransferase PagP from Pectobacterium carotovorum subsp. carotovorum (strain PC1).